The chain runs to 275 residues: MAIRSYRILTPDTRNRSVSGFDGRVQLDPQKKLTSGQHHCGSRNGRGIITARHRGGGHKRLYRQIDFRRDKEHISGKIVTIEYDPNRSAYICKVHYKNGDKMYILHPRGVMIGDTILSGPKAPISIGNALPLTNMPLGTAIHNIEITLGKGGQLARAAGAVAELIAKEDRSATLRLPSGEVRLISENCSATIGQVGNITANNRSFGKAGAKRWLGKRSEVRGVAMNPVDHPHGGGEGRTPIGRKKPVTPWGYSALGKKSRKRNRYSDASILRRRE.

Residues alanine 224–glutamate 275 are disordered.

It belongs to the universal ribosomal protein uL2 family. In terms of assembly, part of the 50S ribosomal subunit.

The protein localises to the plastid. The protein resides in the chloroplast. The polypeptide is Large ribosomal subunit protein uL2c (rpl2) (Picea abies (Norway spruce)).